A 255-amino-acid chain; its full sequence is Type III pantothenate kinase (255 aa).

6–13 is an ATP binding site; sequence DIGNTTSE. Substrate contacts are provided by residues Tyr-100 and 107-110; that span reads GIDR. Asp-109 (proton acceptor) is an active-site residue. Asp-129 is a K(+) binding site. Thr-132 is a binding site for ATP. Position 184 (Thr-184) interacts with substrate.

Belongs to the type III pantothenate kinase family. Homodimer. NH4(+) serves as cofactor. The cofactor is K(+).

Its subcellular location is the cytoplasm. The enzyme catalyses (R)-pantothenate + ATP = (R)-4'-phosphopantothenate + ADP + H(+). Its pathway is cofactor biosynthesis; coenzyme A biosynthesis; CoA from (R)-pantothenate: step 1/5. Catalyzes the phosphorylation of pantothenate (Pan), the first step in CoA biosynthesis. This Persephonella marina (strain DSM 14350 / EX-H1) protein is Type III pantothenate kinase.